Here is a 630-residue protein sequence, read N- to C-terminus: MPTTFKEIPRERPVTPLLDRADTPHGLRRLGEAELETLADELRLELLYSVGQTGGHFGAGLGVIELTIALHYVFDTPDDRLVWDVGHQAYPHKILTGRRARMSTLRQKEGVAAFPRRSESEYDTFGVGHSSTSISAALGMAIASRLQGSERKSIAVIGDGALTAGMAFEALNHAPEVAADMLVILNDNDMSISRNVGGLSNYLAKILSSRTYSSMREGSKKVLSRLPGAWEIARRTEEYAKGMLVPGTLFEELGWNYIGPIDGHDLPTLIATLRNMRDLKGPQFLHVVTKKGKGFAPAEVDPIGYHAITKLEPLNAPAAQKKISAPKYSGVFGQWICDMADADARLVGITPAMKEGSDLVAFSERFPERYFDVAIAEQHAVTLAAGMACEGSKPVVAIYSTFLQRGYDQLIHDVAVQNLDVLFAIDRAGLVGEDGPTHAGSFDLSYLRCIPGMLVMTPSDENELRKLLSTGYLHTGPAAVRYPRGTGPNAVIEASLDPLEIGKGVVRRQGQGVAILAFGVQLAEALVVAEKLDATVIDMRFVKPLDEALVSEAAANHELLVTLEENAVMGGAGAAVSEFLARANILKSVLHLGLPDVYVEHAKPAQMLTECGLDAQGIEAAINERLALIG.

Thiamine diphosphate is bound by residues H87 and 128 to 130; that span reads GHS. Residue D159 coordinates Mg(2+). Thiamine diphosphate contacts are provided by residues 160–161, N188, F295, and E377; that span reads GA. Residue N188 coordinates Mg(2+).

This sequence belongs to the transketolase family. DXPS subfamily. Homodimer. Requires Mg(2+) as cofactor. Thiamine diphosphate serves as cofactor.

It carries out the reaction D-glyceraldehyde 3-phosphate + pyruvate + H(+) = 1-deoxy-D-xylulose 5-phosphate + CO2. It functions in the pathway metabolic intermediate biosynthesis; 1-deoxy-D-xylulose 5-phosphate biosynthesis; 1-deoxy-D-xylulose 5-phosphate from D-glyceraldehyde 3-phosphate and pyruvate: step 1/1. Catalyzes the acyloin condensation reaction between C atoms 2 and 3 of pyruvate and glyceraldehyde 3-phosphate to yield 1-deoxy-D-xylulose-5-phosphate (DXP). This Pseudomonas syringae pv. syringae (strain B728a) protein is 1-deoxy-D-xylulose-5-phosphate synthase.